The primary structure comprises 509 residues: Cytochrome P450 monooxygenase AFT11-1 (509 aa).

Residue Cys-432 participates in heme binding.

This sequence belongs to the cytochrome P450 family. Heme serves as cofactor.

Its pathway is mycotoxin biosynthesis. In terms of biological role, cytochrome P450 monooxygenase; part of the gene clusters that mediate the biosynthesis of the host-selective toxins (HSTs) AF-toxins responsible for Alternaria black spot of strawberry disease by the strawberry pathotype. AF-toxin I and III are valine derivatives of 2,3-dyhydroxy-isovaleric acid and 2-hydroxy-isovaleric acid respectively, while AF II is an isoleucine derivative of 2-hydroxy-valeric acid. These derivatives are bound to a 9,10-epoxy-8-hydroxy-9-methyl-decatrienoic acid (EDA) moiety. On cellular level, AF-toxins affect plasma membrane of susceptible cells and cause a sudden increase in loss of K(+) after a few minutes of toxin treatment. The aldo-keto reductase AFTS1 catalyzes the conversion of 2-keto-isovaleric acid (2-KIV) to 2-hydroxy-isovaleric acid (2-HIV) by reduction of its ketone to an alcohol. The acyl-CoA ligase AFT1, the hydrolase AFT2 and the enoyl-CoA hydratases AFT3 and AFT6, but also the polyketide synthase AFT9, the acyl-CoA dehydrogenase AFT10, the cytochrome P450 monooxygenase AFT11 and the oxidoreductase AFT12 are all involved in the biosynthesis of the AK-, AF- and ACT-toxin common EDA structural moiety. The exact function of each enzyme, and of additional enzymes identified within the AF-toxin clusters have still to be determined. The protein is Cytochrome P450 monooxygenase AFT11-1 of Alternaria alternata (Alternaria rot fungus).